A 464-amino-acid polypeptide reads, in one-letter code: Desmin (464 aa).

At S2 the chain carries Blocked amino end (Ser). The head stretch occupies residues 2–100 (SQSYSSSQRV…QEFLQTRTNE (99 aa)). A phosphoserine; by CDK1 mark is found at S7 and S23. Position 65 is a phosphothreonine; by CDK1 (T65). The 309-residue stretch at 100–408 (EKVELQELND…KLLEGEENRI (309 aa)) folds into the IF rod domain. A coil 1A region spans residues 101–133 (KVELQELNDRFANYIEKVRFLEQQNALMVAEVN). A linker 1 region spans residues 134 to 143 (RLRGKEPTRV). A coil 1B region spans residues 144–244 (AEMYEEELRE…HEEEIRELQA (101 aa)). The interval 245–260 (QLQEQHIQVEMDISKP) is linker 12. Residues 261 to 279 (DLTAALRDIRAQYESIAAK) form a coil 2A region. Residues 280–287 (NIAEAEEW) are linker 2. Residues 288 to 404 (YKSKVSDLTQ…ATYRKLLEGE (117 aa)) are coil 2B. The tail stretch occupies residues 405–464 (ENRISIPMHQTFASALNFRETSPDQRGSEVHTKKTVMIKTIETRDGEVVSEATQQQHEVL).

This sequence belongs to the intermediate filament family. As to quaternary structure, homomer.

The protein localises to the cytoplasm. Its subcellular location is the myofibril. It localises to the sarcomere. The protein resides in the z line. It is found in the cell membrane. The protein localises to the sarcolemma. Functionally, muscle-specific type III intermediate filament essential for proper muscular structure and function. Plays a crucial role in maintaining the structure of sarcomeres, inter-connecting the Z-disks and forming the myofibrils, linking them not only to the sarcolemmal cytoskeleton, but also to the nucleus and mitochondria, thus providing strength for the muscle fiber during activity. In adult striated muscle they form a fibrous network connecting myofibrils to each other and to the plasma membrane from the periphery of the Z-line structures. The sequence is that of Desmin (DES) from Gallus gallus (Chicken).